A 105-amino-acid polypeptide reads, in one-letter code: Large ribosomal subunit protein bL21 (105 aa).

The protein belongs to the bacterial ribosomal protein bL21 family. As to quaternary structure, part of the 50S ribosomal subunit. Contacts protein L20.

Functionally, this protein binds to 23S rRNA in the presence of protein L20. The chain is Large ribosomal subunit protein bL21 from Rickettsia canadensis (strain McKiel).